Consider the following 517-residue polypeptide: MQLTVVLVGIVVLVLAYLSSTGKVYPHGPQALPILGNLVQFRSLQARPDQELLRIAKKYGQLCMLWFGSNPVLIISSPKAAKDMMDQRGAIYSSRPAQNSFRATQWPWRLVTTPTGETFRLLRKIYHNLLGPQQSLHFRRYQDFESKVMLADLLDRPEAFQLGVERFALSVIFSACYQVRLDDLAHPTMTLFYSIWEQMLKYFQPGSLLLDFFPILQRLPKSMQPWLKLANSLRARELRLHRAFLSTLKKQVQNSTAVACFGTMLVKIQEKENISDERACDILAMLIGAGADTTSSYLQTFFKVIALHPNAALKAQKELDRVVGQDRLPTWDDEPNLPYVRAIIKEVHRWAPIGSLGIPHATTDSDVYDGKHIPRNTIVFPNLTALCRDAERYHNPDLFLPERFLGDDLDAYSSALHPDWRVRDHFHYGFGRRLCQGIFVAEASLYIVVSRLLWGFDIAKEEGESLDMDDKLAGLVTKPKPFRVTIKSRAPSYERVMRQERAIAKTDILSFNDVHFV.

The chain crosses the membrane as a helical span at residues 5–27 (VVLVGIVVLVLAYLSSTGKVYPH). Heme is bound at residue Cys435.

This sequence belongs to the cytochrome P450 family. Requires heme as cofactor.

It localises to the membrane. In terms of biological role, cytochrome P450 monooxygenase; part of the gene cluster that mediates the biosynthesis of antifungal fernane-type triterpenoid polytolypin. PolD doe not seem to be involved in the biosynthesis of polytolypin. Within the pathway, the triterpene cyclase polA first catalyzes the cyclization of 2,3-oxidosqualene to motiol, polc converts the 4-alpha-methyl group of motiol to a carboxyl group, polB is responsible for appending a hydroxyl group at the 2-alpha position and polE is a dual functional P450, which can catalyze the formation of both the 1-beta-hydroxyl group and 10-beta-carboxyl group. This Polytolypa hystricis (strain UAMH7299) protein is Cytochrome P450 monooxygenase polD.